We begin with the raw amino-acid sequence, 662 residues long: Capsid protein (662 aa).

Belongs to the anelloviridae capsid protein family.

The protein resides in the virion. Functionally, self-assembles to form an icosahedral capsid with a T=1 symmetry, about 30 nm in diameter, and consisting of 60 capsid proteins. The capsid encapsulates the genomic DNA. Capsid protein is involved in attachment and entry into the host cell. This chain is Capsid protein, found in Homo sapiens (Human).